Consider the following 268-residue polypeptide: 4-hydroxy-tetrahydrodipicolinate reductase (268 aa).

Residues 10 to 15, Asp-36, 99 to 101, and 123 to 126 each bind NAD(+); these read GASGRM, GTT, and APNM. Catalysis depends on His-156, which acts as the Proton donor/acceptor. Residue His-157 coordinates (S)-2,3,4,5-tetrahydrodipicolinate. Lys-160 (proton donor) is an active-site residue. Residue 166 to 167 coordinates (S)-2,3,4,5-tetrahydrodipicolinate; sequence GT.

It belongs to the DapB family.

It is found in the cytoplasm. The catalysed reaction is (S)-2,3,4,5-tetrahydrodipicolinate + NAD(+) + H2O = (2S,4S)-4-hydroxy-2,3,4,5-tetrahydrodipicolinate + NADH + H(+). It catalyses the reaction (S)-2,3,4,5-tetrahydrodipicolinate + NADP(+) + H2O = (2S,4S)-4-hydroxy-2,3,4,5-tetrahydrodipicolinate + NADPH + H(+). Its pathway is amino-acid biosynthesis; L-lysine biosynthesis via DAP pathway; (S)-tetrahydrodipicolinate from L-aspartate: step 4/4. Its function is as follows. Catalyzes the conversion of 4-hydroxy-tetrahydrodipicolinate (HTPA) to tetrahydrodipicolinate. This chain is 4-hydroxy-tetrahydrodipicolinate reductase, found in Herminiimonas arsenicoxydans.